A 470-amino-acid chain; its full sequence is Membrane-bound lytic murein transglycosylase F (470 aa).

Residues 1-24 (MPSLKTKGAAGKFASLLLVLALSA) form the signal peptide. Residues 25-262 (CSRPAPPPET…RALERYFGHV (238 aa)) are non-LT domain. Positions 263–470 (KRLGSSDILG…RGEDGLPPPG (208 aa)) are LT domain. The active site involves glutamate 309.

It in the N-terminal section; belongs to the bacterial solute-binding protein 3 family. The protein in the C-terminal section; belongs to the transglycosylase Slt family.

Its subcellular location is the cell outer membrane. The catalysed reaction is Exolytic cleavage of the (1-&gt;4)-beta-glycosidic linkage between N-acetylmuramic acid (MurNAc) and N-acetylglucosamine (GlcNAc) residues in peptidoglycan, from either the reducing or the non-reducing ends of the peptidoglycan chains, with concomitant formation of a 1,6-anhydrobond in the MurNAc residue.. In terms of biological role, murein-degrading enzyme that degrades murein glycan strands and insoluble, high-molecular weight murein sacculi, with the concomitant formation of a 1,6-anhydromuramoyl product. Lytic transglycosylases (LTs) play an integral role in the metabolism of the peptidoglycan (PG) sacculus. Their lytic action creates space within the PG sacculus to allow for its expansion as well as for the insertion of various structures such as secretion systems and flagella. This Thiobacillus denitrificans (strain ATCC 25259 / T1) protein is Membrane-bound lytic murein transglycosylase F.